Here is a 437-residue protein sequence, read N- to C-terminus: Sorting nexin-30 (437 aa).

The interval 1-45 (MAGGPPKALPSTGPQSLRDMPHPLAGSSSEEAVGGDSTPSPDLLM) is disordered. Thr38 bears the Phosphothreonine mark. Ser40 carries the phosphoserine modification. Residues 89-210 (RDLFVTVDDP…VFLTAKDLNA (122 aa)) enclose the PX domain. The a 1,2-diacyl-sn-glycero-3-phospho-(1D-myo-inositol-3-phosphate) site is built by Arg132, Gln134, Lys162, and Arg176. In terms of domain architecture, BAR spans 234–437 (KLRSRPLEFA…PLLQEKQETK (204 aa)).

It belongs to the sorting nexin family. As to quaternary structure, heterodimer; heterodimerizes with SNX4.

It is found in the early endosome membrane. Its function is as follows. Involved in the regulation of endocytosis and in several stages of intracellular trafficking. Together with SNX4, involved in autophagosome assembly. This chain is Sorting nexin-30, found in Mus musculus (Mouse).